The following is a 268-amino-acid chain: MARDRRDYYYHQAKEEGYRSRASFKLKQINEKHNVIKRGDSVVDLGAAPGGWLQVAKQLSGGKVLGVDLQRIDPIEGVETIQGDINAESTIKKIIKIVGEKGADVVLCDAAPNLSGNWSYDHARSIELATSALECAKKILKPKGNFAVKVFQGDMFNDYLDEVRNNFVRVKAYSPQASRSQSAEIYIIGKKFLTAPLRKGDKFVVDIEKLGSSGDGAVLIEGFVVFVKEVEVGEKVRIKISDVKPNFAFADVEERIESSETENREKSD.

Residues Gly50, Trp52, Asp68, Asp84, and Asp109 each contribute to the S-adenosyl-L-methionine site. Lys149 acts as the Proton acceptor in catalysis. The region spanning 196–254 (PLRKGDKFVVDIEKLGSSGDGAVLIEGFVVFVKEVEVGEKVRIKISDVKPNFAFADVEE) is the TRAM domain.

This sequence belongs to the class I-like SAM-binding methyltransferase superfamily. RNA methyltransferase RlmE family.

It is found in the cytoplasm. It catalyses the reaction uridine(2552) in 23S rRNA + S-adenosyl-L-methionine = 2'-O-methyluridine(2552) in 23S rRNA + S-adenosyl-L-homocysteine + H(+). In terms of biological role, specifically methylates the uridine in position 2552 of 23S rRNA at the 2'-O position of the ribose in the fully assembled 50S ribosomal subunit. The protein is Ribosomal RNA large subunit methyltransferase E of Methanosarcina mazei (strain ATCC BAA-159 / DSM 3647 / Goe1 / Go1 / JCM 11833 / OCM 88) (Methanosarcina frisia).